Reading from the N-terminus, the 117-residue chain is Immunoglobulin kappa variable 1-27 (117 aa).

The N-terminal stretch at 1 to 22 is a signal peptide; that stretch reads MDMRVPAQLLGLLLLWLPDTRC. The interval 23 to 45 is framework-1; that stretch reads DIQMTQSPSSLSASVGDRVTITC. The Ig-like domain occupies 23-117; that stretch reads DIQMTQSPSS…YYCQKYNSAP (95 aa). Cys45 and Cys110 form a disulfide bridge. Residues 46 to 56 are complementarity-determining-1; the sequence is RASQGISNYLA. The interval 57–71 is framework-2; it reads WYQQKPGKVPKLLIY. Residues 72 to 78 form a complementarity-determining-2 region; that stretch reads AASTLQS. The framework-3 stretch occupies residues 79-110; the sequence is GVPSRFSGSGSGTDFTLTISSLQPEDVATYYC. The complementarity-determining-3 stretch occupies residues 111–117; that stretch reads QKYNSAP.

In terms of assembly, immunoglobulins are composed of two identical heavy chains and two identical light chains; disulfide-linked.

Its subcellular location is the secreted. It localises to the cell membrane. V region of the variable domain of immunoglobulin light chains that participates in the antigen recognition. Immunoglobulins, also known as antibodies, are membrane-bound or secreted glycoproteins produced by B lymphocytes. In the recognition phase of humoral immunity, the membrane-bound immunoglobulins serve as receptors which, upon binding of a specific antigen, trigger the clonal expansion and differentiation of B lymphocytes into immunoglobulins-secreting plasma cells. Secreted immunoglobulins mediate the effector phase of humoral immunity, which results in the elimination of bound antigens. The antigen binding site is formed by the variable domain of one heavy chain, together with that of its associated light chain. Thus, each immunoglobulin has two antigen binding sites with remarkable affinity for a particular antigen. The variable domains are assembled by a process called V-(D)-J rearrangement and can then be subjected to somatic hypermutations which, after exposure to antigen and selection, allow affinity maturation for a particular antigen. The chain is Immunoglobulin kappa variable 1-27 from Homo sapiens (Human).